Consider the following 239-residue polypeptide: ATP-dependent dethiobiotin synthetase BioD (239 aa).

15-20 is an ATP binding site; that stretch reads EIGKTF. Thr19 lines the Mg(2+) pocket. The active site involves Lys40. ATP-binding positions include Asp57, 118–121, and 178–179; these read EGVG and NH. Mg(2+) is bound by residues Asp57 and Glu118.

Belongs to the dethiobiotin synthetase family. Homodimer. Mg(2+) serves as cofactor.

It localises to the cytoplasm. It carries out the reaction (7R,8S)-7,8-diammoniononanoate + CO2 + ATP = (4R,5S)-dethiobiotin + ADP + phosphate + 3 H(+). The protein operates within cofactor biosynthesis; biotin biosynthesis; biotin from 7,8-diaminononanoate: step 1/2. Catalyzes a mechanistically unusual reaction, the ATP-dependent insertion of CO2 between the N7 and N8 nitrogen atoms of 7,8-diaminopelargonic acid (DAPA, also called 7,8-diammoniononanoate) to form a ureido ring. This chain is ATP-dependent dethiobiotin synthetase BioD, found in Burkholderia cenocepacia (strain ATCC BAA-245 / DSM 16553 / LMG 16656 / NCTC 13227 / J2315 / CF5610) (Burkholderia cepacia (strain J2315)).